The following is a 377-amino-acid chain: Guanine nucleotide-binding protein subunit beta-2 (377 aa).

WD repeat units follow at residues 63 to 93, 105 to 135, 154 to 185, 202 to 233, 246 to 276, 293 to 323, and 339 to 369; these read GHTG…IVWN, LPCA…SIFN, GHKG…VLWD, GHTA…RLWD, GHEG…RLFD, GDIP…YVWD, and SHEG…KIWA.

It belongs to the WD repeat G protein beta family. G proteins are composed of 3 units, alpha, beta and gamma.

In terms of biological role, guanine nucleotide-binding proteins (G proteins) are involved as a modulator or transducer in various transmembrane signaling systems. The beta and gamma chains are required for the GTPase activity, for replacement of GDP by GTP, and for G protein-effector interaction. This Nicotiana tabacum (Common tobacco) protein is Guanine nucleotide-binding protein subunit beta-2.